The following is a 179-amino-acid chain: Cell division protein ZapC (179 aa).

This sequence belongs to the ZapC family. As to quaternary structure, interacts directly with FtsZ.

Its subcellular location is the cytoplasm. In terms of biological role, contributes to the efficiency of the cell division process by stabilizing the polymeric form of the cell division protein FtsZ. Acts by promoting interactions between FtsZ protofilaments and suppressing the GTPase activity of FtsZ. The chain is Cell division protein ZapC from Aliivibrio salmonicida (strain LFI1238) (Vibrio salmonicida (strain LFI1238)).